The sequence spans 212 residues: Kynurenine formamidase (212 aa).

Residue Trp17 participates in substrate binding. Residues His48, His52, and Asp54 each coordinate Zn(2+). His58 acts as the Proton donor/acceptor in catalysis. Residues His161 and Glu173 each contribute to the Zn(2+) site.

It belongs to the Cyclase 1 superfamily. KynB family. As to quaternary structure, homodimer. It depends on Zn(2+) as a cofactor.

The enzyme catalyses N-formyl-L-kynurenine + H2O = L-kynurenine + formate + H(+). It functions in the pathway amino-acid degradation; L-tryptophan degradation via kynurenine pathway; L-kynurenine from L-tryptophan: step 2/2. Catalyzes the hydrolysis of N-formyl-L-kynurenine to L-kynurenine, the second step in the kynurenine pathway of tryptophan degradation. This Salinibacter ruber (strain DSM 13855 / M31) protein is Kynurenine formamidase.